The primary structure comprises 74 residues: Small ribosomal subunit protein bS18 (74 aa).

Belongs to the bacterial ribosomal protein bS18 family. As to quaternary structure, part of the 30S ribosomal subunit. Forms a tight heterodimer with protein bS6.

Its function is as follows. Binds as a heterodimer with protein bS6 to the central domain of the 16S rRNA, where it helps stabilize the platform of the 30S subunit. The protein is Small ribosomal subunit protein bS18 of Rhizorhabdus wittichii (strain DSM 6014 / CCUG 31198 / JCM 15750 / NBRC 105917 / EY 4224 / RW1) (Sphingomonas wittichii).